The following is a 663-amino-acid chain: Cyclic nucleotide-gated channel alpha-2 (663 aa).

Positions 1–61 (MTEKANGVKS…QLAEMDAPQQ (61 aa)) are disordered. The Cytoplasmic portion of the chain corresponds to 1 to 144 (MTEKANGVKS…PAGDWYYRWL (144 aa)). Residues 12 to 23 (PANNHNHHAPPA) are compositionally biased toward low complexity. Residues 145–166 (FLIALPVLYNWCLLVARACFSD) form a helical membrane-spanning segment. Residues 167 to 176 (LQKGYYIVWL) are Extracellular-facing. Residues 177–197 (VLDYVSDVVYIADLFIRLRTG) traverse the membrane as a helical segment. The Cytoplasmic segment spans residues 198-222 (FLEQGLLVKDTKKLRDNYIHTMQFK). Residues 223 to 241 (LDVASIIPTDLIYFAVGIH) traverse the membrane as a helical segment. Over 242 to 246 (NPEVR) the chain is Extracellular. Residues 247–265 (FNRLLHFARMFEFFDRTET) form a helical membrane-spanning segment. At 266-272 (RTSYPNI) the chain is on the cytoplasmic side. The ion conduction pathway stretch occupies residues 270–378 (PNIFRISNLI…GNVGSMISNM (109 aa)). A helical transmembrane segment spans residues 273-296 (FRISNLILYILIIIHWNACIYYAI). Topologically, residues 297–319 (SKSIGFGVDTWVYPNITDPEYGY) are extracellular. Transmembrane regions (helical) follow at residues 320 to 354 (LSRE…LFVI) and 355 to 379 (FDFL…SNMN). Residues 337–340 (TIGE) form a selectivity filter region. Positions 380–456 (ATRAEFQAKI…STLKKVRIFQ (77 aa)) are C-linker. At 380-663 (ATRAEFQAKI…NSPEPPAEKP (284 aa)) the chain is on the cytoplasmic side. The interval 460–580 (AGLLVELVLK…EERGREILMK (121 aa)) is cyclic nucleotide-binding domain. Gly520, Ser523, Arg536, and Thr537 together coordinate 3',5'-cyclic GMP. Residues Arg536 and Thr537 each coordinate 3',5'-cyclic AMP. Positions 597-651 (VQEKLEQLETNMDTLYTRFARLLAEYTGAQQKLKQRITVLETKMKQNNEDDSLSD) form a coiled coil. The tract at residues 640-663 (MKQNNEDDSLSDGMNSPEPPAEKP) is disordered.

This sequence belongs to the cyclic nucleotide-gated cation channel (TC 1.A.1.5) family. CNGA2 subfamily. The olfactory cyclic nucleotide-gated channel is an heterotetramer composed of CNGA2, CNGA4 and CNGB1b subunits with 2:1:1 stoichiometry. In terms of tissue distribution, olfactory neurons.

The protein localises to the cell projection. The protein resides in the cilium membrane. It carries out the reaction Ca(2+)(in) = Ca(2+)(out). The catalysed reaction is Na(+)(in) = Na(+)(out). The enzyme catalyses K(+)(in) = K(+)(out). It catalyses the reaction NH4(+)(in) = NH4(+)(out). It carries out the reaction Rb(+)(in) = Rb(+)(out). The catalysed reaction is Li(+)(in) = Li(+)(out). The enzyme catalyses Cs(+)(in) = Cs(+)(out). Pore-forming subunit of the olfactory cyclic nucleotide-gated channel. Operates in the cilia of olfactory sensory neurons where chemical stimulation of the odorant is converted to an electrical signal. Mediates odorant-induced cAMP-dependent Ca(2+) influx triggering neuron depolarization. The rise of intracellular Ca(2+) levels potentiates the olfactory response by activating Ca(2+)-dependent Cl(-) channels, but it also serves as a negative feedback signal to desensitize the channel for rapid adaptation to odorants. Conducts cAMP- and cGMP-gated ion currents, with permeability for monovalent and divalent cations. The sequence is that of Cyclic nucleotide-gated channel alpha-2 from Bos taurus (Bovine).